The following is a 257-amino-acid chain: ATP synthase delta chain, chloroplastic (257 aa).

The N-terminal 70 residues, 1-70, are a transit peptide targeting the chloroplast; it reads MAALQNPVAL…PRGGALGTRM (70 aa).

The protein belongs to the ATPase delta chain family. As to quaternary structure, F-type ATPases have 2 components, CF(1) - the catalytic core - and CF(0) - the membrane proton channel. CF(1) has five subunits: alpha(3), beta(3), gamma(1), delta(1), epsilon(1). CF(0) has three main subunits: a, b and c.

It is found in the plastid. The protein resides in the chloroplast thylakoid membrane. In terms of biological role, this protein seems to be part of the stalk that links CF(0) to CF(1). It either transmits conformational changes from CF(0) into CF(1) or is implicated in proton conduction. The chain is ATP synthase delta chain, chloroplastic (ATPD) from Spinacia oleracea (Spinach).